A 276-amino-acid polypeptide reads, in one-letter code: Undecaprenyl-diphosphatase 2 (276 aa).

The next 8 membrane-spanning stretches (helical) occupy residues 1 to 21, 44 to 64, 87 to 107, 114 to 134, 150 to 170, 190 to 210, 220 to 240, and 251 to 271; these read MSLW…LFPV, QLLP…LWYF, GHLM…GLLL, VFHD…LLWV, MTFK…IPGF, AAEF…VLEL, LMDA…SVRF, and LASF…WFML.

It belongs to the UppP family.

It localises to the cell inner membrane. It catalyses the reaction di-trans,octa-cis-undecaprenyl diphosphate + H2O = di-trans,octa-cis-undecaprenyl phosphate + phosphate + H(+). Functionally, catalyzes the dephosphorylation of undecaprenyl diphosphate (UPP). Confers resistance to bacitracin. This Burkholderia ambifaria (strain ATCC BAA-244 / DSM 16087 / CCUG 44356 / LMG 19182 / AMMD) (Burkholderia cepacia (strain AMMD)) protein is Undecaprenyl-diphosphatase 2.